A 278-amino-acid polypeptide reads, in one-letter code: Splicing factor YJU2 (278 aa).

The Zn(2+) site is built by Cys51, Cys54, Cys88, and Cys91. Residues 228-278 (HRQRTNKPGNNNDEKRTPLFNPTSTKGKIQKKSSVRTNPLGIVIKRGKSLK) form a disordered region. 2 consecutive short sequence motifs (nuclear localization signal) follow at residues 242–258 (KRTPLFNPTSTKGKIQK) and 260–278 (SSVRTNPLGIVIKRGKSLK).

This sequence belongs to the CWC16 family. YJU2 subfamily. As to quaternary structure, component of the spliceosome. Present in the activated B complex, the catalytically activated B* complex which catalyzes the branching, the catalytic step 1 C complex catalyzing the exon ligation, and the postcatalytic P complex containing the ligated exons (mRNA) and the excised lariat intron. Interacts (via C-terminus) with CLF1. Interacts (via N-terminus) with SYF1. Interacts with U2 snRNA; this interaction is direct. Identified in the CWC complex (or CEF1-associated complex), a spliceosome sub-complex reminiscent of a late-stage spliceosome composed of the U2, U5 and U6 snRNAs and at least BUD13, BUD31, BRR2, CDC40, CEF1, CLF1, CUS1, CWC2, CWC15, CWC21, CWC22, CWC23, CWC24, CWC25, CWC27, ECM2, HSH155, IST3, ISY1, LEA1, MSL1, NTC20, PRP8, PRP9, PRP11, PRP19, PRP21, PRP22, PRP45, PRP46, SLU7, SMB1, SMD1, SMD2, SMD3, SMX2, SMX3, SNT309, SNU114, SPP2, SYF1, SYF2, RSE1 and YJU2.

The protein localises to the nucleus. In terms of biological role, part of the spliceosome which catalyzes two sequential transesterification reactions, first the excision of the non-coding intron from pre-mRNA and then the ligation of the coding exons to form the mature mRNA. Plays a role (via N-terminus) in stabilizing the structure of the spliceosome catalytic core and docking of the branch helix into the active site, producing 5'-exon and lariat intron-3'-intermediates. Further stabilizes spliceosome conformation for 3'-splice site docking (via C-terminus) promoting exon ligation. The sequence is that of Splicing factor YJU2 from Saccharomyces cerevisiae (strain ATCC 204508 / S288c) (Baker's yeast).